An 846-amino-acid chain; its full sequence is Translation initiation factor IF-2 (846 aa).

Residues 345-512 (SRAPVVTIMG…AVLLQSEVLE (168 aa)) enclose the tr-type G domain. The segment at 354–361 (GHVDHGKT) is G1. Residue 354 to 361 (GHVDHGKT) participates in GTP binding. The tract at residues 379 to 383 (GITQH) is G2. The G3 stretch occupies residues 400 to 403 (DTPG). GTP is bound by residues 400–404 (DTPGH) and 454–457 (NKID). Residues 454 to 457 (NKID) are G4. The interval 490–492 (SAK) is G5.

Belongs to the TRAFAC class translation factor GTPase superfamily. Classic translation factor GTPase family. IF-2 subfamily.

Its subcellular location is the cytoplasm. Its function is as follows. One of the essential components for the initiation of protein synthesis. Protects formylmethionyl-tRNA from spontaneous hydrolysis and promotes its binding to the 30S ribosomal subunits. Also involved in the hydrolysis of GTP during the formation of the 70S ribosomal complex. This chain is Translation initiation factor IF-2, found in Francisella tularensis subsp. holarctica (strain FTNF002-00 / FTA).